The primary structure comprises 158 residues: uncharacterized protein (158 aa).

The protein belongs to the SixA phosphatase family.

This is an uncharacterized protein from Mycobacterium tuberculosis (strain CDC 1551 / Oshkosh).